The primary structure comprises 40 residues: Putative truncated non-structural protein 3b (40 aa).

Belongs to the coronaviruses NS3b protein family.

The chain is Putative truncated non-structural protein 3b from Feline coronavirus (strain FIPV WSU-79/1146) (FCoV).